A 474-amino-acid polypeptide reads, in one-letter code: Cysteine--tRNA ligase (474 aa).

Cys30 contributes to the Zn(2+) binding site. The 'HIGH' region motif lies at 32-42 (PTVYNFAHIGN). Cys212, His237, and Glu241 together coordinate Zn(2+). Positions 270 to 274 (KMSKS) match the 'KMSKS' region motif. ATP is bound at residue Lys273.

The protein belongs to the class-I aminoacyl-tRNA synthetase family. As to quaternary structure, monomer. The cofactor is Zn(2+).

The protein localises to the cytoplasm. It carries out the reaction tRNA(Cys) + L-cysteine + ATP = L-cysteinyl-tRNA(Cys) + AMP + diphosphate. The chain is Cysteine--tRNA ligase from Leptospira borgpetersenii serovar Hardjo-bovis (strain JB197).